Here is an 80-residue protein sequence, read N- to C-terminus: U20-ctenitoxin-Pn1a (80 aa).

Intrachain disulfides connect Cys-3-Cys-20, Cys-10-Cys-26, Cys-17-Cys-52, Cys-19-Cys-40, Cys-28-Cys-38, Cys-58-Cys-71, and Cys-75-Cys-80.

In terms of tissue distribution, expressed by the venom gland.

Its subcellular location is the secreted. Omega-agatoxin are antagonists of voltage-gated calcium channels (Cav). Induces rapid general flaccid paralysis followed by death when injected into the cerebral ventricle of mice at dose levels of 3 ug per mouse. The protein is U20-ctenitoxin-Pn1a of Phoneutria nigriventer (Brazilian armed spider).